Here is a 1003-residue protein sequence, read N- to C-terminus: Methyl-CpG-binding domain protein 6 (1003 aa).

In terms of domain architecture, MBD spans 11–81 (DRAGGPVATS…KVFNFDPLAP (71 aa)). The required for interaction with ASXL1/2/3 stretch occupies residues 57 to 68 (DGTCKCGLECPL). Disordered regions lie at residues 120-219 (TCSH…PPPA), 238-664 (VPSD…PLLF), and 683-1003 (ATLD…KLAP). Pro residues-rich tracts occupy residues 140–155 (PGPP…PPTT) and 268–287 (TPPP…PASQ). 3 stretches are compositionally biased toward low complexity: residues 297-308 (LPLVLGPLGGAP), 319-328 (LASSLLSAAA), and 348-361 (AQAP…SLRP). Pro residues predominate over residues 391 to 407 (APAPVPQPFSLPEPSQP). Low complexity predominate over residues 408–426 (ILPSVLSLLGLPTPGPSHS). Residues 439–456 (LPPPPTLSSGSPPQPRHP) are compositionally biased toward pro residues. Low complexity-rich tracts occupy residues 460–498 (SLPG…PSEG) and 531–548 (GAGF…LSLG). Positions 570-589 (QPPPEPLLPPPGGPGPPLAP) are enriched in pro residues. Positions 590–602 (GEPEGPSLLVASL) are enriched in low complexity. Positions 603–617 (LPPPPSDLLPPPSAP) are enriched in pro residues. Residues 618–633 (PSNLLASFLPLLALGP) are compositionally biased toward low complexity. Residues 635–649 (AGDGEGSAEGAGGPS) show a composition bias toward gly residues. A compositionally biased stretch (low complexity) spans 650–662 (GEPFSGLGDLSPL). Over residues 707–718 (TSSVTTATTDPG) the composition is skewed to polar residues. Composition is skewed to low complexity over residues 732-761 (PPQL…LPSL), 768-778 (LLSGQLGLQLL), and 788-798 (SEASSPLACLL). Over residues 805–817 (PEQPEAPCLPPES) the composition is skewed to pro residues. A compositionally biased stretch (low complexity) spans 818-837 (PASALEPEPARPPLSALAPP). The segment covering 947 to 958 (RKSRRGRRRKYN) has biased composition (basic residues). Polar residues predominate over residues 959–969 (PTRNSNSSRQD). A compositionally biased stretch (basic residues) spans 989–1003 (RPGRPAKNKRRKLAP).

Core component of the polycomb repressive deubiquitinase (PR-DUB) complex, at least composed of BAP1, one of ASXL1, ASXL2 or (probably) ASXL3, and one of MBD5 or MBD6. Distinct combinations of ASXL and MBD proteins may preferentially bind specific histone modification marks. The PR-DUB core associates with a number of accessory proteins, including FOXK1, FOXK2, KDM1B, HCFC1 and OGT; KDM1B specifically associates with ASXL2 PR-DUB complexes. Interacts (via MBD domain) with ASXL1, ASXL2 and ASXL3 (via PHD domain); the interaction is probably direct, mediates association with other PR-DUB complex core components.

It is found in the nucleus. Its subcellular location is the chromosome. Non-catalytic component of the polycomb repressive deubiquitinase (PR-DUB) complex, a complex that specifically mediates deubiquitination of histone H2A monoubiquitinated at 'Lys-120' (H2AK119ub1). Important for stability of PR-DUB components and stimulating its ubiquitinase activity. As part of the PR-DUB complex, associates with chromatin enriched in histone marks H3K4me1, H3K4me3, and H3K27Ac, but not in H3K27me3. MBD5 and MBD6 containing complexes associate with distinct chromatin regions enriched in genes involved in different pathways. Heterochromatin recruitment is not mediated by DNA methylation. The PR-DUB complex is an epigenetic regulator of gene expression, including genes involved in development, cell communication, signaling, cell proliferation and cell viability; may promote cancer cell growth. This chain is Methyl-CpG-binding domain protein 6 (MBD6), found in Homo sapiens (Human).